The sequence spans 496 residues: Angiopoietin-2 (496 aa).

The signal sequence occupies residues 1-18; the sequence is MWQLVFLTLSCDLAVATA. Residues N90, N120, N134, N152, N241, and N304 are each glycosylated (N-linked (GlcNAc...) asparagine). Residues 167–249 adopt a coiled-coil conformation; the sequence is STNKLEKQIL…VNNSVLQKQQ (83 aa). Residues 275–495 form the Fibrinogen C-terminal domain; sequence KDEQIIFRDC…ATTMMIRPAD (221 aa). Cysteines 284 and 313 form a disulfide. Residues D429, D431, C433, and C435 each coordinate Ca(2+). Disulfide bonds link C433–C435 and C437–C450.

As to quaternary structure, interacts with TEK/TIE2, competing for the same binding site as ANGPT1. Interacts with ITGA5. Interacts with SVEP1/polydom. Interacts with THBD; this interaction significantly inhibits the generation of activated PC and TAFIa/CPB2 by the thrombin/thrombomodulin complex.

The protein resides in the secreted. Its function is as follows. Binds to TEK/TIE2, competing for the ANGPT1 binding site, and modulating ANGPT1 signaling. Can induce tyrosine phosphorylation of TEK/TIE2 in the absence of ANGPT1. In the absence of angiogenic inducers, such as VEGF, ANGPT2-mediated loosening of cell-matrix contacts may induce endothelial cell apoptosis with consequent vascular regression. In concert with VEGF, it may facilitate endothelial cell migration and proliferation, thus serving as a permissive angiogenic signal. Involved in the regulation of lymphangiogenesis. This is Angiopoietin-2 (ANGPT2) from Bos taurus (Bovine).